A 78-amino-acid polypeptide reads, in one-letter code: Acyl carrier protein (78 aa).

The Carrier domain maps to 2–77 (SDIEQRVKKI…QAIDYVNANL (76 aa)). S37 carries the O-(pantetheine 4'-phosphoryl)serine modification.

Belongs to the acyl carrier protein (ACP) family. In terms of processing, 4'-phosphopantetheine is transferred from CoA to a specific serine of apo-ACP by AcpS. This modification is essential for activity because fatty acids are bound in thioester linkage to the sulfhydryl of the prosthetic group.

Its subcellular location is the cytoplasm. The protein operates within lipid metabolism; fatty acid biosynthesis. Carrier of the growing fatty acid chain in fatty acid biosynthesis. In Methylobacillus flagellatus (strain ATCC 51484 / DSM 6875 / VKM B-1610 / KT), this protein is Acyl carrier protein.